The sequence spans 579 residues: Basic helix-loop-helix ARNT-like protein 2 (579 aa).

An interaction with PER2 region spans residues 1-198 (MEFPRKRRGR…SPREKPIDTK (198 aa)). Positions 4–9 (PRKRRG) match the Nuclear localization signal motif. The tract at residues 40–61 (RTGVSAPSGIREAHSQMEKRRR) is disordered. A bHLH domain is found at 48-101 (GIREAHSQMEKRRRDKMNHLIQKLSSMIPPHIPTAHKLDKLSVLRRAVQYLRSL). Residues 50–59 (REAHSQMEKR) show a composition bias toward basic and acidic residues. The short motif at 118 to 128 (IQDKELSHLIL) is the Nuclear export signal 1 element. The 72-residue stretch at 119–190 (QDKELSHLIL…KEQLSCDGSP (72 aa)) folds into the PAS 1 domain. Basic and acidic residues predominate over residues 186–196 (CDGSPREKPID). The segment at 186-213 (CDGSPREKPIDTKTSQVYSHPYTGRPRM) is disordered. Lysine 226 participates in a covalent cross-link: Glycyl lysine isopeptide (Lys-Gly) (interchain with G-Cter in SUMO2 and SUMO3). Lysine 233 is covalently cross-linked (Glycyl lysine isopeptide (Lys-Gly) (interchain with G-Cter in SUMO2)). Residues 296–366 (VPQKSGKINV…DKHKAVLQSK (71 aa)) form the PAS 2 domain. The short motif at 331–339 (LGYLPQELL) is the Nuclear export signal 2 element. A PAC domain is found at 371–414 (TDSYKFRVKDGAFVTLKSEWFSFTNPWTKELEYIVSVNTLVLGR). The segment at 469 to 536 (RLHSSSPEDA…AHPHGPLPGD (68 aa)) is disordered.

In terms of assembly, component of the circadian core oscillator, which includes the CRY proteins, CLOCK, or NPAS2, BMAL1 or BMAL2, CSNK1D and/or CSNK1E, TIMELESS and the PER proteins. Interacts directly with CLOCK to form the BMAL2-CLOCK transactivator. Can form heterodimers or homodimers which interact directly with CLOCK to form the transcription activator. Interacts with NPAS2 and HIF1A. Interacts with PER2. In terms of tissue distribution, expressed in the suprachiasmatic nucleus (SCN).

Its subcellular location is the nucleus. Its function is as follows. Transcriptional activator which forms a core component of the circadian clock. The circadian clock, an internal time-keeping system, regulates various physiological processes through the generation of approximately 24 hour circadian rhythms in gene expression, which are translated into rhythms in metabolism and behavior. It is derived from the Latin roots 'circa' (about) and 'diem' (day) and acts as an important regulator of a wide array of physiological functions including metabolism, sleep, body temperature, blood pressure, endocrine, immune, cardiovascular, and renal function. Consists of two major components: the central clock, residing in the suprachiasmatic nucleus (SCN) of the brain, and the peripheral clocks that are present in nearly every tissue and organ system. Both the central and peripheral clocks can be reset by environmental cues, also known as Zeitgebers (German for 'timegivers'). The predominant Zeitgeber for the central clock is light, which is sensed by retina and signals directly to the SCN. The central clock entrains the peripheral clocks through neuronal and hormonal signals, body temperature and feeding-related cues, aligning all clocks with the external light/dark cycle. Circadian rhythms allow an organism to achieve temporal homeostasis with its environment at the molecular level by regulating gene expression to create a peak of protein expression once every 24 hours to control when a particular physiological process is most active with respect to the solar day. Transcription and translation of core clock components (CLOCK, NPAS2, BMAL1, BMAL2, PER1, PER2, PER3, CRY1 and CRY2) plays a critical role in rhythm generation, whereas delays imposed by post-translational modifications (PTMs) are important for determining the period (tau) of the rhythms (tau refers to the period of a rhythm and is the length, in time, of one complete cycle). A diurnal rhythm is synchronized with the day/night cycle, while the ultradian and infradian rhythms have a period shorter and longer than 24 hours, respectively. Disruptions in the circadian rhythms contribute to the pathology of cardiovascular diseases, cancer, metabolic syndromes and aging. A transcription/translation feedback loop (TTFL) forms the core of the molecular circadian clock mechanism. Transcription factors, CLOCK or NPAS2 and BMAL1 or BMAL2, form the positive limb of the feedback loop, act in the form of a heterodimer and activate the transcription of core clock genes and clock-controlled genes (involved in key metabolic processes), harboring E-box elements (5'-CACGTG-3') within their promoters. The core clock genes: PER1/2/3 and CRY1/2 which are transcriptional repressors form the negative limb of the feedback loop and interact with the CLOCK|NPAS2-BMAL1|BMAL2 heterodimer inhibiting its activity and thereby negatively regulating their own expression. This heterodimer also activates nuclear receptors NR1D1/2 and RORA/B/G, which form a second feedback loop and which activate and repress BMAL1 transcription, respectively. The CLOCK-BMAL2 heterodimer activates the transcription of SERPINE1/PAI1 and BHLHE40/DEC1. The sequence is that of Basic helix-loop-helix ARNT-like protein 2 (Bmal2) from Mus musculus (Mouse).